A 185-amino-acid chain; its full sequence is MVLSSQLSVGMFISTKDGLYKVVSVSKVSGNKGDTFIKVSLQAAGSDVTVERNFKAGQEVKEAQFEPRNLEYLYLEEDKYLFLDLGNYDKIYIPKEIMKDNAMFLKAGVTVFALVHEGTVFSMELPHFLELMVAKTDFPGDSLSLSGGAKKALLETGVEVLVPPFVEIGDVIKVDTRTCEYIQRV.

Belongs to the elongation factor P family.

The protein localises to the cytoplasm. Its pathway is protein biosynthesis; polypeptide chain elongation. Its function is as follows. Involved in peptide bond synthesis. Stimulates efficient translation and peptide-bond synthesis on native or reconstituted 70S ribosomes in vitro. Probably functions indirectly by altering the affinity of the ribosome for aminoacyl-tRNA, thus increasing their reactivity as acceptors for peptidyl transferase. This Chlamydia trachomatis serovar D (strain ATCC VR-885 / DSM 19411 / UW-3/Cx) protein is Elongation factor P 1 (efp1).